A 547-amino-acid polypeptide reads, in one-letter code: 2-succinyl-5-enolpyruvyl-6-hydroxy-3-cyclohexene-1-carboxylate synthase (547 aa).

Belongs to the TPP enzyme family. MenD subfamily. Homodimer. Mg(2+) is required as a cofactor. It depends on Mn(2+) as a cofactor. The cofactor is thiamine diphosphate.

It catalyses the reaction isochorismate + 2-oxoglutarate + H(+) = 5-enolpyruvoyl-6-hydroxy-2-succinyl-cyclohex-3-ene-1-carboxylate + CO2. It participates in quinol/quinone metabolism; 1,4-dihydroxy-2-naphthoate biosynthesis; 1,4-dihydroxy-2-naphthoate from chorismate: step 2/7. The protein operates within quinol/quinone metabolism; menaquinone biosynthesis. Functionally, catalyzes the thiamine diphosphate-dependent decarboxylation of 2-oxoglutarate and the subsequent addition of the resulting succinic semialdehyde-thiamine pyrophosphate anion to isochorismate to yield 2-succinyl-5-enolpyruvyl-6-hydroxy-3-cyclohexene-1-carboxylate (SEPHCHC). The polypeptide is 2-succinyl-5-enolpyruvyl-6-hydroxy-3-cyclohexene-1-carboxylate synthase (Mycobacterium sp. (strain KMS)).